Here is a 257-residue protein sequence, read N- to C-terminus: NAD-capped RNA hydrolase NudC (257 aa).

Positions 25 and 69 each coordinate substrate. The Zn(2+) site is built by cysteine 98 and cysteine 101. Residue glutamate 111 coordinates substrate. Zn(2+) is bound by residues cysteine 116 and cysteine 119. Residue tyrosine 124 participates in substrate binding. Residues 125-248 (PQIAPCIIVA…TVARRLIEDT (124 aa)) enclose the Nudix hydrolase domain. Positions 158, 174, and 178 each coordinate a divalent metal cation. Positions 159-180 (GFVEVGETLEQAVAREVMEESG) match the Nudix box motif. 192 to 199 (QPWPFPQS) is a binding site for substrate. Glutamate 219 contributes to the a divalent metal cation binding site. Alanine 241 contacts substrate.

This sequence belongs to the Nudix hydrolase family. NudC subfamily. In terms of assembly, homodimer. The cofactor is Mg(2+). Requires Mn(2+) as cofactor. Zn(2+) is required as a cofactor.

It catalyses the reaction a 5'-end NAD(+)-phospho-ribonucleoside in mRNA + H2O = a 5'-end phospho-adenosine-phospho-ribonucleoside in mRNA + beta-nicotinamide D-ribonucleotide + 2 H(+). The enzyme catalyses NAD(+) + H2O = beta-nicotinamide D-ribonucleotide + AMP + 2 H(+). The catalysed reaction is NADH + H2O = reduced beta-nicotinamide D-ribonucleotide + AMP + 2 H(+). Functionally, mRNA decapping enzyme that specifically removes the nicotinamide adenine dinucleotide (NAD) cap from a subset of mRNAs by hydrolyzing the diphosphate linkage to produce nicotinamide mononucleotide (NMN) and 5' monophosphate mRNA. The NAD-cap is present at the 5'-end of some mRNAs and stabilizes RNA against 5'-processing. Has preference for mRNAs with a 5'-end purine. Catalyzes the hydrolysis of a broad range of dinucleotide pyrophosphates. The polypeptide is NAD-capped RNA hydrolase NudC (Escherichia coli (strain 55989 / EAEC)).